Reading from the N-terminus, the 88-residue chain is Long neurotoxin 20 (88 aa).

Residues 1-21 form the signal peptide; it reads MKTLLLTLVVVTIVCLDLGNS. 5 disulfide bridges follow: Cys24–Cys42, Cys35–Cys63, Cys48–Cys52, Cys67–Cys78, and Cys79–Cys84.

It belongs to the three-finger toxin family. Long-chain subfamily. Type II alpha-neurotoxin sub-subfamily. As to expression, expressed by the venom gland.

Its subcellular location is the secreted. Binds with high affinity to muscular (alpha-1/CHRNA1) and neuronal (alpha-7/CHRNA7) nicotinic acetylcholine receptor (nAChR) and inhibits acetylcholine from binding to the receptor, thereby impairing neuromuscular and neuronal transmission. In Drysdalia coronoides (White-lipped snake), this protein is Long neurotoxin 20.